Reading from the N-terminus, the 82-residue chain is RNA-binding protein Hfq (82 aa).

Positions 10 to 70 (DAFLNQVRKD…ISTVAPLRPI (61 aa)) constitute a Sm domain.

It belongs to the Hfq family. Homohexamer.

In terms of biological role, RNA chaperone that binds small regulatory RNA (sRNAs) and mRNAs to facilitate mRNA translational regulation in response to envelope stress, environmental stress and changes in metabolite concentrations. Also binds with high specificity to tRNAs. The chain is RNA-binding protein Hfq from Syntrophomonas wolfei subsp. wolfei (strain DSM 2245B / Goettingen).